A 200-amino-acid polypeptide reads, in one-letter code: NAD(P)H dehydrogenase (quinone) (200 aa).

A Flavodoxin-like domain is found at 4–190; it reads VLVLYYSTYG…EGARFQGRHV (187 aa). Residues 10–15 and 78–80 contribute to the FMN site; these read STYGHV and TRY. Tyr-12 contacts NAD(+). Substrate is bound at residue Trp-98. Residues 113-119 and His-134 contribute to the FMN site; that span reads STASQHG.

The protein belongs to the WrbA family. It depends on FMN as a cofactor.

It carries out the reaction a quinone + NADH + H(+) = a quinol + NAD(+). The catalysed reaction is a quinone + NADPH + H(+) = a quinol + NADP(+). The chain is NAD(P)H dehydrogenase (quinone) from Methylobacterium radiotolerans (strain ATCC 27329 / DSM 1819 / JCM 2831 / NBRC 15690 / NCIMB 10815 / 0-1).